Consider the following 543-residue polypeptide: CTP synthase (543 aa).

The interval 1–265 (MTNYIFVTGG…DELVVQRFGL (265 aa)) is amidoligase domain. S13 contributes to the CTP binding site. Position 13 (S13) interacts with UTP. ATP contacts are provided by residues 14 to 19 (SLGKGI) and D71. D71 and E139 together coordinate Mg(2+). Residues 146-148 (DIE), 186-191 (KTKPTQ), and K222 each bind CTP. Residues 186 to 191 (KTKPTQ) and K222 each bind UTP. 238–240 (KDA) lines the ATP pocket. The Glutamine amidotransferase type-1 domain maps to 290 to 541 (TIGMVGKYVE…VKAAGEYYKN (252 aa)). Residue G351 coordinates L-glutamine. The Nucleophile; for glutamine hydrolysis role is filled by C378. Residues 379 to 382 (LGMQ), E402, and R469 each bind L-glutamine. Active-site residues include H514 and E516.

The protein belongs to the CTP synthase family. As to quaternary structure, homotetramer.

It carries out the reaction UTP + L-glutamine + ATP + H2O = CTP + L-glutamate + ADP + phosphate + 2 H(+). The enzyme catalyses L-glutamine + H2O = L-glutamate + NH4(+). The catalysed reaction is UTP + NH4(+) + ATP = CTP + ADP + phosphate + 2 H(+). The protein operates within pyrimidine metabolism; CTP biosynthesis via de novo pathway; CTP from UDP: step 2/2. Its activity is regulated as follows. Allosterically activated by GTP, when glutamine is the substrate; GTP has no effect on the reaction when ammonia is the substrate. The allosteric effector GTP functions by stabilizing the protein conformation that binds the tetrahedral intermediate(s) formed during glutamine hydrolysis. Inhibited by the product CTP, via allosteric rather than competitive inhibition. Catalyzes the ATP-dependent amination of UTP to CTP with either L-glutamine or ammonia as the source of nitrogen. Regulates intracellular CTP levels through interactions with the four ribonucleotide triphosphates. This is CTP synthase from Pseudoalteromonas atlantica (strain T6c / ATCC BAA-1087).